A 164-amino-acid polypeptide reads, in one-letter code: Protein-export protein SecB (164 aa).

It belongs to the SecB family. As to quaternary structure, homotetramer, a dimer of dimers. One homotetramer interacts with 1 SecA dimer.

It is found in the cytoplasm. Functionally, one of the proteins required for the normal export of preproteins out of the cell cytoplasm. It is a molecular chaperone that binds to a subset of precursor proteins, maintaining them in a translocation-competent state. It also specifically binds to its receptor SecA. The polypeptide is Protein-export protein SecB (Ruegeria sp. (strain TM1040) (Silicibacter sp.)).